We begin with the raw amino-acid sequence, 846 residues long: ATR-interacting protein mus304 (846 aa).

3 disordered regions span residues 20–40 (DVSV…FDGI), 90–109 (QGST…QKKP), and 135–162 (EPQK…KTTT). The span at 144-162 (TSTSRITTSSISVQQKTTT) shows a compositional bias: low complexity. Coiled-coil stretches lie at residues 168-240 (ATQS…LADE) and 327-359 (EYSE…LQAK). An EEXXXDL motif motif is present at residues 504–510 (EELLFDL). Residues 651–681 (GAVQGSVSNGSTSASVSNPNQNSNSSTTQRG) are disordered. The span at 655 to 676 (GSVSNGSTSASVSNPNQNSNSS) shows a compositional bias: low complexity.

It belongs to the ATRIP family. Interacts with ATR/mei-41. In terms of tissue distribution, highly expressed in the oocyte and nurse cells from stage 5 onward and in embryos prior to during nuclear division 14. Then, it decreases to background levels during interphase 14. Weakly or not expressed in stage embryos and imaginal disks.

The protein resides in the cytoplasm. Its function is as follows. DNA damage checkpoint protein required for chromosome break repair and for genomic stability during development. The chain is ATR-interacting protein mus304 (mus304) from Drosophila melanogaster (Fruit fly).